The sequence spans 423 residues: GTPase HflX (423 aa).

The region spanning 202–366 is the Hflx-type G domain; that stretch reads PAAAIVGYTN…LLETILRNQK (165 aa). GTP is bound by residues 208-215, 233-237, 255-258, 321-324, and 344-346; these read GYTNAGKS, FATLD, DTVG, NKID, and SAK. Mg(2+) is bound by residues Ser-215 and Thr-235.

This sequence belongs to the TRAFAC class OBG-HflX-like GTPase superfamily. HflX GTPase family. In terms of assembly, monomer. Associates with the 50S ribosomal subunit. The cofactor is Mg(2+).

It is found in the cytoplasm. Functionally, GTPase that associates with the 50S ribosomal subunit and may have a role during protein synthesis or ribosome biogenesis. This chain is GTPase HflX, found in Lacrimispora saccharolytica (strain ATCC 35040 / DSM 2544 / NRCC 2533 / WM1) (Clostridium saccharolyticum).